The following is a 433-amino-acid chain: Beta-agarase AgaA (433 aa).

Positions 1–20 (MRKITSILLTCVMGCTATYA) are cleaved as a signal peptide. One can recognise a GH16 domain in the interval 21–295 (ADWDGVPVPA…WVRFYKPVPI (275 aa)). The active-site Nucleophile is the E147. Residue E152 is the Proton donor of the active site. Positions 300 to 431 (TTVELGNFHN…QWNGDEIRFV (132 aa)) constitute a CBM6 domain.

Belongs to the glycosyl hydrolase 16 family. Monomer.

It localises to the periplasm. It carries out the reaction Hydrolysis of (1-&gt;4)-beta-D-galactosidic linkages in agarose, giving the tetramer as the predominant product.. Its activity is regulated as follows. Activity is abolished by Hg(2+), Cu(2+), Pb(2+) and Zn(2+) ions, but is not affected by NaCl up to at least 1.0 M, Mg(2+), K(+) and Ca(2+). Not affected by iodoacetamide, p-chloromercuribenzoate, dithiothreitol, 2-mercaptoethanol, EDTA and sodium dodecyl sulfate. Inhibited by N-bromosuccinimide. In terms of biological role, endo-type beta-agarase, which produces neoagarotetraose (NA4) as the main final product, with a small amount of neoagarohexaose (NA6) and neoagarobiose (NA2). This is Beta-agarase AgaA from Microbulbifer thermotolerans.